Here is a 167-residue protein sequence, read N- to C-terminus: NAD(P)H-quinone oxidoreductase subunit I, chloroplastic (167 aa).

4Fe-4S ferredoxin-type domains follow at residues 55 to 84 (GRIH…VDWK) and 95 to 124 (LNYS…MTEE). [4Fe-4S] cluster is bound by residues C64, C67, C70, C74, C104, C107, C110, and C114.

The protein belongs to the complex I 23 kDa subunit family. NDH is composed of at least 16 different subunits, 5 of which are encoded in the nucleus. [4Fe-4S] cluster serves as cofactor.

The protein localises to the plastid. The protein resides in the chloroplast thylakoid membrane. The enzyme catalyses a plastoquinone + NADH + (n+1) H(+)(in) = a plastoquinol + NAD(+) + n H(+)(out). The catalysed reaction is a plastoquinone + NADPH + (n+1) H(+)(in) = a plastoquinol + NADP(+) + n H(+)(out). Functionally, NDH shuttles electrons from NAD(P)H:plastoquinone, via FMN and iron-sulfur (Fe-S) centers, to quinones in the photosynthetic chain and possibly in a chloroplast respiratory chain. The immediate electron acceptor for the enzyme in this species is believed to be plastoquinone. Couples the redox reaction to proton translocation, and thus conserves the redox energy in a proton gradient. In Solanum tuberosum (Potato), this protein is NAD(P)H-quinone oxidoreductase subunit I, chloroplastic.